We begin with the raw amino-acid sequence, 413 residues long: Multifunctional CCA protein (413 aa).

ATP is bound by residues G8 and R11. Residues G8 and R11 each contribute to the CTP site. The Mg(2+) site is built by D21 and D23. R91, R137, and R140 together coordinate ATP. The CTP site is built by R91, R137, and R140. In terms of domain architecture, HD spans 228 to 329 (TGVHTLMTLS…VKLFDAIDAW (102 aa)).

Belongs to the tRNA nucleotidyltransferase/poly(A) polymerase family. Bacterial CCA-adding enzyme type 1 subfamily. Monomer. Can also form homodimers and oligomers. Mg(2+) is required as a cofactor. Requires Ni(2+) as cofactor.

It carries out the reaction a tRNA precursor + 2 CTP + ATP = a tRNA with a 3' CCA end + 3 diphosphate. The enzyme catalyses a tRNA with a 3' CCA end + 2 CTP + ATP = a tRNA with a 3' CCACCA end + 3 diphosphate. Catalyzes the addition and repair of the essential 3'-terminal CCA sequence in tRNAs without using a nucleic acid template. Adds these three nucleotides in the order of C, C, and A to the tRNA nucleotide-73, using CTP and ATP as substrates and producing inorganic pyrophosphate. tRNA 3'-terminal CCA addition is required both for tRNA processing and repair. Also involved in tRNA surveillance by mediating tandem CCA addition to generate a CCACCA at the 3' terminus of unstable tRNAs. While stable tRNAs receive only 3'-terminal CCA, unstable tRNAs are marked with CCACCA and rapidly degraded. The chain is Multifunctional CCA protein from Salmonella typhi.